A 342-amino-acid chain; its full sequence is Serpentine receptor class gamma-69 (342 aa).

A run of 7 helical transmembrane segments spans residues 11-31, 51-71, 106-126, 140-160, 191-211, 222-242, and 269-289; these read MAGL…SVVV, SLLY…HFLI, PIAI…IVAA, LFVL…IPCK, IAAV…LIAL, AEIS…IYAF, and FAID…STTV.

Belongs to the nematode receptor-like protein srg family.

Its subcellular location is the membrane. The chain is Serpentine receptor class gamma-69 (srg-69) from Caenorhabditis elegans.